Consider the following 317-residue polypeptide: Transaldolase (317 aa).

The active-site Schiff-base intermediate with substrate is Lys-132.

The protein belongs to the transaldolase family. Type 1 subfamily. In terms of assembly, homodimer.

It is found in the cytoplasm. The catalysed reaction is D-sedoheptulose 7-phosphate + D-glyceraldehyde 3-phosphate = D-erythrose 4-phosphate + beta-D-fructose 6-phosphate. It functions in the pathway carbohydrate degradation; pentose phosphate pathway; D-glyceraldehyde 3-phosphate and beta-D-fructose 6-phosphate from D-ribose 5-phosphate and D-xylulose 5-phosphate (non-oxidative stage): step 2/3. Transaldolase is important for the balance of metabolites in the pentose-phosphate pathway. The sequence is that of Transaldolase from Yersinia enterocolitica serotype O:8 / biotype 1B (strain NCTC 13174 / 8081).